We begin with the raw amino-acid sequence, 1430 residues long: Bromodomain-containing protein homolog (1430 aa).

The segment at 23–49 (FACPVRGCDRSYKTIMGLQYHLMKYDH) adopts a C2H2-type zinc-finger fold. The disordered stretch occupies residues 51–111 (NPQPLTPVLT…AGGGSASGVS (61 aa)). Residues 62–81 (SRKKARSRSGGHHSTPRPHK) are compositionally biased toward basic residues. A PHD-type 1 zinc finger spans residues 283 to 333 (DAVCCICLDGECQNTNVILFCDMCNLAVHQDCYGVPYIPEGQWLCRRCLQS). Zn(2+)-binding residues include C286, C289, C303, C306, H311, C314, C327, and C330. A C2HC pre-PHD-type zinc finger spans residues 337–370 (PVNCVLCPNAGGAFKQTDHGQWAHVVCALWIPEV). A PHD-type 2 zinc finger spans residues 394–457 (LTCYVCKEKG…QKFAYCHAHT (64 aa)). One can recognise a Bromo domain in the interval 611 to 715 (LQLNPLEAAL…DQAAPLFVQV (105 aa)). A compositionally biased stretch (basic residues) spans 796-805 (KARFAARHSS). Disordered stretches follow at residues 796–887 (KARF…SSPV), 901–942 (AQAA…TTAA), 1012–1054 (ANLP…QALP), and 1076–1301 (QRDV…GQKP). Positions 842–857 (HDDDDEEEDSDEDSMG) are enriched in acidic residues. Residues 865–887 (LLNSTQTPPCSPIKSLNNSSSPV) show a composition bias toward polar residues. Composition is skewed to low complexity over residues 922–942 (NSQS…TTAA), 1034–1043 (SSSMSPKKSP), and 1085–1107 (APSQ…SCSD). Residues 1108-1120 (FDSDEASEGDADG) are compositionally biased toward acidic residues. Basic and acidic residues predominate over residues 1121–1137 (DPDRDGGRSRSEERDST). Composition is skewed to polar residues over residues 1151 to 1165 (ASLN…NMAI) and 1265 to 1278 (NTTA…TNNN). Over residues 1281 to 1293 (KHSEDSASSERHN) the composition is skewed to basic and acidic residues. Positions 1305 to 1378 (PLQLVWAKCR…TWQWLPANKL (74 aa)) constitute a PWWP domain.

Component of the Enok complex composed of at least Br140, enok, Eaf6 and Ing5. As part of the Enok complex, interacts with elg1 and the Elg1 RFC-like complex.

It is found in the nucleus. Its function is as follows. Scaffold subunit of the histone acetyltransferase (HAT) Enok complex which has histone H3 acetyltransferase activity. As part of the Enok complex, associates with the Elg1 RFC-like complex and down-regulates its PCNA-unloading function to promote the G1/S transition. May also play a role in maintaining the protein levels and stability of enok. The polypeptide is Bromodomain-containing protein homolog (Drosophila melanogaster (Fruit fly)).